The sequence spans 296 residues: Phosphoribosylaminoimidazole-succinocarboxamide synthase (296 aa).

The protein belongs to the SAICAR synthetase family.

The enzyme catalyses 5-amino-1-(5-phospho-D-ribosyl)imidazole-4-carboxylate + L-aspartate + ATP = (2S)-2-[5-amino-1-(5-phospho-beta-D-ribosyl)imidazole-4-carboxamido]succinate + ADP + phosphate + 2 H(+). The protein operates within purine metabolism; IMP biosynthesis via de novo pathway; 5-amino-1-(5-phospho-D-ribosyl)imidazole-4-carboxamide from 5-amino-1-(5-phospho-D-ribosyl)imidazole-4-carboxylate: step 1/2. This Citrifermentans bemidjiense (strain ATCC BAA-1014 / DSM 16622 / JCM 12645 / Bem) (Geobacter bemidjiensis) protein is Phosphoribosylaminoimidazole-succinocarboxamide synthase.